The following is a 484-amino-acid chain: MGSAFERVVRRVVQELDHGGEFIPVTSLQSSTGFQPYCLVVRKPSSSWFWKPRYKCVNLSIKDILEPDAAEPDVQRGRSFHFYDAMDGQIQGSVELAAPGQAKIAGGAAVSDSSSTSMNVYSLSVDPNTWQTLLHERHLRQPEHKVLQQLRSRGDNVYVVTEVLQTQKEVEVTRTHKREGSGRFSLPGATCLQGEGQGHLSQKKTVTIPSGSTLAFRVAQLVIDSDLDVLLFPDKKQRTFQPPATGHKRSTSEGAWPQLPSGLSMMRCLHNFLTDGVPAEGAFTEDFQGLRAEVETISKELELLDRELCQLLLEGLEGVLRDQLALRALEEALEQGQSLGPVEPLDGPAGAVLECLVLSSGMLVPELAIPVVYLLGALTMLSETQHKLLAEALESQTLLGPLELVGSLLEQSAPWQERSTMSLPPGLLGNSWGEGAPAWVLLDECGLELGEDTPHVCWEPQAQGRMCALYASLALLSGLSQEPH.

Position 37 is a phosphotyrosine (Tyr-37). S-(2-succinyl)cysteine is present on Cys-56. A run of 2 beta stranded transmembrane segments spans residues 91–97 (QGSVELA) and 103–108 (KIAGGA). Tyr-158 is modified (phosphotyrosine). Transmembrane regions (beta stranded) follow at residues 180–186 (GSGRFSL) and 191–197 (CLQGEGQ). Ser-185 carries the phosphoserine modification. Residues Cys-191 and Cys-268 each carry the S-(2-succinyl)cysteine modification. A lipid anchor (S-palmitoyl cysteine) is attached at Cys-191. The interval 277 to 296 (VPAEGAFTEDFQGLRAEVET) is linker helix loop. Cys-309 carries the S-(2-succinyl)cysteine modification. Ser-338 carries an O-linked (GlcNAc) serine glycan. Position 467 is an S-(2-succinyl)cysteine (Cys-467).

It belongs to the gasdermin family. As to quaternary structure, homooligomer; homooligomeric ring-shaped pore complex containing 27-28 subunits when inserted in the membrane. Homooligomerization is promoted by the mTORC1 complex in macrophages. In response to a canonical inflammasome stimulus, such as nigericin, recruited to NLRP3 inflammasone with similar kinetics to that of uncleaved CASP1 precursor. Although this recruitment is also observed in the absence of PYCARD, it is more efficient in its presence. Cleavage at Asp-275 by CASP1 (mature and uncleaved precursor forms), CASP4, CASP5 or CASP8 relieves autoinhibition and is sufficient to initiate pyroptosis. Cleavage by CASP1 and CASP4 is not strictly dependent on the consensus cleavage site on GSDMD but depends on an exosite interface on CASP1 that recognizes and binds the Gasdermin-D, C-terminal (GSDMD-CT) part. Cleavage by CASP8 takes place following inactivation of MAP3K7/TAK1 by Yersinia toxin YopJ. Cleavage at Asp-87 by CASP3 or CASP7 inactivates the ability to mediate pyroptosis, but generates the Gasdermin-D, p13 chain, which translocates to the nucleus and acts as a transcription regulator. Cleavage by papain allergen generates the Gasdermin-D, p40 chain. Post-translationally, palmitoylated at Cys-191 by ZDHHC5 and ZDHHC9 in response to microbial infection and danger signals. Palmitoylation takes place before cleavage by caspases (CASP1, CASP4, CASP5 or CASP8) and is required for membrane translocation and pore formation. Depalmitoylated by LYPLA2. In terms of processing, succination of Cys-191 by the Krebs cycle intermediate fumarate, which leads to S-(2-succinyl)cysteine residues, inhibits processing by caspases, and ability to initiate pyroptosis. Succination modification is catalyzed by a non-enzymatic reaction caused by an accumulation of fumarate. Glycosylated: O-GlcNAcylation by OGT leads to reduced cleavage by CASP4 and decreased LPS-induced endothelial cell pyroptosis. Post-translationally, (Microbial infection) Cleaved and inactivated by Protease 3C from Human enterovirus 71 (EV71), preventing GSDMD-mediated pyroptosis. In terms of processing, (Microbial infection) Cleaved and inactivated by the 3C-like proteinase nsp5 from human coronavirus SARS-CoV-2, preventing GSDMD-mediated pyroptosis. (Microbial infection) Ubiquitinated by S.flexneri IpaH7.8, leading to its degradation by the proteasome. Expressed in the suprabasal cells of esophagus, as well as in the isthmus/neck, pit, and gland of the stomach, suggesting preferential expression in differentiating cells.

The protein resides in the cytoplasm. The protein localises to the cytosol. It localises to the inflammasome. It is found in the cell membrane. Its subcellular location is the secreted. The protein resides in the mitochondrion membrane. The protein localises to the nucleus. Its activity is regulated as follows. The full-length protein before cleavage is inactive: intramolecular interactions between N- and C-terminal domains mediate autoinhibition in the absence of activation signal. The intrinsic pyroptosis-inducing activity is carried by the released N-terminal moiety (Gasdermin-D, N-terminal) following cleavage by caspases CASP1, CASP4, CASP5 or CASP8. Cleavage at Asp-87 by CASP3 or CASP7 inactivates the ability to mediate pyroptosis. Homooligomerization and pore formation is specifically inhibited by VHH(GSDMD-1) and, to a lesser extent, VHH(GSDMD-2) nanobodies, protecting against excessive pyroptosis. Inhibited by small molecule NU6300, which covalently reacts with Cys-191, thereby preventing palmitoylation and pyroptosis. In terms of biological role, precursor of a pore-forming protein that plays a key role in host defense against pathogen infection and danger signals. This form constitutes the precursor of the pore-forming protein: upon cleavage, the released N-terminal moiety (Gasdermin-D, N-terminal) binds to membranes and forms pores, triggering pyroptosis. Its function is as follows. Promotes pyroptosis in response to microbial infection and danger signals. Produced by the cleavage of gasdermin-D by inflammatory caspases CASP1, CASP4 or CASP5 in response to canonical, as well as non-canonical (such as cytosolic LPS) inflammasome activators. After cleavage, moves to the plasma membrane where it strongly binds to inner leaflet lipids, including monophosphorylated phosphatidylinositols, such as phosphatidylinositol 4-phosphate, bisphosphorylated phosphatidylinositols, such as phosphatidylinositol (4,5)-bisphosphate, as well as phosphatidylinositol (3,4,5)-bisphosphate, and more weakly to phosphatidic acid and phosphatidylserine. Homooligomerizes within the membrane and forms pores of 10-15 nanometers (nm) of inner diameter, allowing the release of mature interleukin-1 (IL1B and IL18) and triggering pyroptosis. Gasdermin pores also allow the release of mature caspase-7 (CASP7). In some, but not all, cells types, pyroptosis is followed by pyroptotic cell death, which is caused by downstream activation of ninjurin-1 (NINJ1), which mediates membrane rupture (cytolysis). Also forms pores in the mitochondrial membrane, resulting in release of mitochondrial DNA (mtDNA) into the cytosol. Gasdermin-D, N-terminal released from pyroptotic cells into the extracellular milieu rapidly binds to and kills both Gram-negative and Gram-positive bacteria, without harming neighboring mammalian cells, as it does not disrupt the plasma membrane from the outside due to lipid-binding specificity. Under cell culture conditions, also active against intracellular bacteria, such as Listeria monocytogenes. Also active in response to MAP3K7/TAK1 inactivation by Yersinia toxin YopJ, which triggers cleavage by CASP8 and subsequent activation. Required for mucosal tissue defense against enteric pathogens. Activation of the non-canonical inflammasome in brain endothelial cells can lead to excessive pyroptosis, leading to blood-brain barrier breakdown. Strongly binds to bacterial and mitochondrial lipids, including cardiolipin. Does not bind to unphosphorylated phosphatidylinositol, phosphatidylethanolamine nor phosphatidylcholine. Transcription coactivator produced by the cleavage by CASP3 or CASP7 in the upper small intestine in response to dietary antigens. Required to maintain food tolerance in small intestine: translocates to the nucleus and acts as a coactivator for STAT1 to induce the transcription of CIITA and MHC class II molecules, which in turn induce type 1 regulatory T (Tr1) cells in upper small intestine. Functionally, produced by the cleavage by papain allergen. After cleavage, moves to the plasma membrane and homooligomerizes within the membrane and forms pores of 10-15 nanometers (nm) of inner diameter, allowing the specific release of mature interleukin-33 (IL33), promoting type 2 inflammatory immune response. This Homo sapiens (Human) protein is Gasdermin-D.